Consider the following 203-residue polypeptide: Dephospho-CoA kinase (203 aa).

A DPCK domain is found at 10 to 203; it reads IIGITGNIGS…LTGGAKGGRG (194 aa). 18–23 is a binding site for ATP; the sequence is GSGKST.

This sequence belongs to the CoaE family.

Its subcellular location is the cytoplasm. The enzyme catalyses 3'-dephospho-CoA + ATP = ADP + CoA + H(+). The protein operates within cofactor biosynthesis; coenzyme A biosynthesis; CoA from (R)-pantothenate: step 5/5. In terms of biological role, catalyzes the phosphorylation of the 3'-hydroxyl group of dephosphocoenzyme A to form coenzyme A. The chain is Dephospho-CoA kinase from Thermus thermophilus (strain ATCC BAA-163 / DSM 7039 / HB27).